The sequence spans 555 residues: Acetyl-coenzyme A thioesterase (555 aa).

The 113-residue stretch at 5–117 folds into the HotDog ACOT-type 1 domain; it reads APGEVVMSQA…FSTFVAKPVG (113 aa). N6-succinyllysine is present on K33. Residues 53–55, 82–84, and R144 contribute to the CoA site; these read TAS and STS. N6-succinyllysine is present on residues K159 and K228. The HotDog ACOT-type 2 domain maps to 179 to 294; the sequence is RGTSVQSIEL…FLIYNAADDK (116 aa). 234 to 236 is a CoA binding site; that stretch reads KFR. The 210-residue stretch at 340-549 folds into the START domain; that stretch reads CIHWDISKQA…IQFLENPPDD (210 aa).

As to quaternary structure, homodimer or homotetramer.

It localises to the cytoplasm. Its subcellular location is the cytosol. The enzyme catalyses acetyl-CoA + H2O = acetate + CoA + H(+). The catalysed reaction is butanoyl-CoA + H2O = butanoate + CoA + H(+). It carries out the reaction hexanoyl-CoA + H2O = hexanoate + CoA + H(+). The protein operates within lipid metabolism; fatty acid metabolism. With respect to regulation, inhibited by ADP. Active in the presence of ATP. Cold labile, it dissociates into inactive monomers at low temperature. Catalyzes the hydrolysis of acyl-CoAs into free fatty acids and coenzyme A (CoASH), regulating their respective intracellular levels. Preferentially hydrolyzes acetyl-CoA. This chain is Acetyl-coenzyme A thioesterase (ACOT12), found in Homo sapiens (Human).